Reading from the N-terminus, the 596-residue chain is Endoribonuclease ZC3H12A (596 aa).

2 disordered regions span residues 1–48 and 97–134; these read MSDP…TSEL and QALTAPSPQPPLVPRGGSTPKPSTLEPSLPEEDREGSD. A compositionally biased stretch (polar residues) spans 10–19; the sequence is VQESNPTMSL. The tract at residues 42–87 is ubiquitin association domain; that stretch reads EAPTSELQMKVDFFRKLGYSSSEIHSVLQKLGVQADTNTVLGELVK. Residues 81 to 150 form a necessary for interaction with TANK region; it reads VLGELVKHGS…DGSNVAMSHG (70 aa). Positions 112–281 are RNase; that stretch reads GGSTPKPSTL…DKFMPPDDPL (170 aa). Positions 135-290 constitute an RNase NYN domain; the sequence is LRPVVIDGSN…LGRHGPSLDN (156 aa). An RNA binding region spans residues 214-220; that stretch reads RRVGGKR. Position 226 (aspartate 226) interacts with Mg(2+). Disordered stretches follow at residues 278 to 306 and 340 to 417; these read DDPLGRHGPSLDNFLRKKPLPSEHRKQPC and NALL…PTEW. The C3H1-type zinc-finger motif lies at 301-324; it reads HRKQPCPYGKKCTYGIKCRFFHPE. Positions 301–454 are necessary for interaction with ZC3H12D; it reads HRKQPCPYGK…SELWGVRGGS (154 aa). Serine 344 is subject to Phosphoserine. Low complexity predominate over residues 356–368; it reads QRPSPASQSSSVS. Phosphoserine is present on residues serine 435 and serine 439. The tract at residues 511-543 is disordered; it reads YWSEPYPLPPPTPVLQEPQRPSPGAGGGPWGRV. Positions 524 to 533 are enriched in low complexity; that stretch reads VLQEPQRPSP.

Belongs to the ZC3H12 family. Oligomer. Found in a deubiquitination complex with TANK, USP10 and ZC3H12A; this complex inhibits genotoxic stress- or interleukin-1-beta-mediated NF-kappaB activation by promoting IKBKG or TRAF6 deubiquitination. Interacts with IKBKG; this interaction increases in response to DNA damage. Interacts with TANK; this interaction increases in response to DNA damage and serves as a bridge to anchor both TANK and USP10 into a deubiquitinating complex. Interacts with TRAF6; this interaction increases in response to DNA damage and is stimulated by TANK. Interacts with USP10; this interaction increases in response to DNA damage and serves as a bridge to anchor both TANK and USP10 into a deubiquitinating complex. Interacts with ZC3H12D. Interacts with TNRC6A. Interacts with IKBKB/IKKB. Interacts with IKBKB/IKKB. Interacts with IKBKB/IKKB. Interacts with BTRC; the interaction occurs when ZC3H12A is phosphorylated in a IKBKB/IKKB-dependent manner. Interacts with IRAK1; this interaction increases the interaction between ZC3H12A and IKBKB/IKKB. Interacts with UPF1; this interaction occurs in a mRNA translationally active- and termination-dependent manner and is essential for ZC3H12A-mediated degradation of target mRNAs. Associates with ribosomes. Interacts with ubiquitin. Requires Mg(2+) as cofactor. Proteolytically cleaved between Arg-111 and Arg-214 by MALT1 in activated T-cells; cleavage at Arg-111 is critical for promoting ZC3H12A degradation in response to T-cell receptor (TCR) stimulation, and hence is necessary for prolonging the stability of a set of mRNAs controlling T-cell activation and Th17 cell differentiation. In terms of processing, phosphorylated by IRAK1; phosphorylation is necessary for subsequent phosphorylation by the I-kappa-B-kinase (IKK) complex. Phosphorylated by I-kappa-B-kinases (IKKs) at Ser-435 and Ser-439 upon lipopolysaccharide (LPS) or IL1B stimulation in macrophages through the MyD88-dependent signaling pathway; these phosphorylations promote rapid ubiquitin proteasome-mediated degradation of ZC3H12A in macrophages and hence allows its target mRNAs, such as IL6, to escape from degradation and accumulate during the inflammatory response. Post-translationally, ubiquitinated; ubiquitination is induced in response to interleukin IL1 receptor stimuli in a IKBKB/IKKB and IRAK1-dependent manner, leading to proteasome-mediated degradation. As to expression, expressed in CD4(+) helper T-cells (at protein level). Highly expressed in macrophages. Expressed in lung, lymph nodes, spleen and thymus. Expressed weakly in heart. Expressed weakly in cardiomyocytes (at protein level). Expressed in spleen, lung, intestine, brown adipose tissue and thymus. Weakly expressed in the heart. Weakly expressed in cardiomyocytes.

It localises to the nucleus. Its subcellular location is the cytoplasm. The protein localises to the rough endoplasmic reticulum membrane. It is found in the cytoplasmic granule. The protein resides in the P-body. Its function is as follows. Endoribonuclease involved in various biological functions such as cellular inflammatory response and immune homeostasis, glial differentiation of neuroprogenitor cells, cell death of cardiomyocytes, adipogenesis and angiogenesis. Functions as an endoribonuclease involved in mRNA decay. Modulates the inflammatory response by promoting the degradation of a set of translationally active cytokine-induced inflammation-related mRNAs, such as IL6 and IL12B, during the early phase of inflammation. Prevents aberrant T-cell-mediated immune reaction by degradation of multiple mRNAs controlling T-cell activation, such as those encoding cytokines (IL6 and IL2), cell surface receptors (ICOS, TNFRSF4 and TNFR2) and transcription factor (REL). Inhibits cooperatively with ZC3H12A the differentiation of helper T cells Th17 in lungs. They repress target mRNA encoding the Th17 cell-promoting factors IL6, ICOS, REL, IRF4, NFKBID and NFKBIZ. The cooperation requires RNA-binding by RC3H1 and the nuclease activity of ZC3H12A. Together with RC3H1, destabilizes TNFRSF4/OX40 mRNA by binding to the conserved stem loop structure in its 3'UTR. Self regulates by destabilizing its own mRNA. Cleaves mRNA harboring a stem-loop (SL), often located in their 3'-UTRs, during the early phase of inflammation in a helicase UPF1-dependent manner. Plays a role in the inhibition of microRNAs (miRNAs) biogenesis. Cleaves the terminal loop of a set of precursor miRNAs (pre-miRNAs) important for the regulation of the inflammatory response leading to their degradation, and thus preventing the biosynthesis of mature miRNAs. Also plays a role in promoting angiogenesis in response to inflammatory cytokines by inhibiting the production of antiangiogenic microRNAs via its anti-dicer RNase activity. Affects the overall ubiquitination of cellular proteins. Positively regulates deubiquitinase activity promoting the cleavage at 'Lys-48'- and 'Lys-63'-linked polyubiquitin chains on TNF receptor-associated factors (TRAFs), preventing JNK and NF-kappa-B signaling pathway activation, and hence negatively regulating macrophage-mediated inflammatory response and immune homeostasis. Induces also deubiquitination of the transcription factor HIF1A, probably leading to its stabilization and nuclear import, thereby positively regulating the expression of proangiogenic HIF1A-targeted genes. Involved in a TANK-dependent negative feedback response to attenuate NF-kappaB activation through the deubiquitination of IKBKG or TRAF6 in response to interleukin-1-beta (IL1B) stimulation or upon DNA damage. Prevents stress granules (SGs) formation and promotes macrophage apoptosis under stress conditions, including arsenite-induced oxidative stress, heat shock, and energy deprivation. Plays a role in the regulation of macrophage polarization; promotes IL4-induced polarization of macrophages M1 into anti-inflammatory M2 state. May also act as a transcription factor that regulates the expression of multiple genes involved in inflammatory response, angiogenesis, adipogenesis and apoptosis. Functions as a positive regulator of glial differentiation of neuroprogenitor cells through an amyloid precursor protein (APP)-dependent signaling pathway. Attenuates septic myocardial contractile dysfunction in response to lipopolysaccharide (LPS) by reducing I-kappa-B-kinase (IKK)-mediated NF-kappa-B activation, and hence myocardial pro-inflammatory cytokine production. The chain is Endoribonuclease ZC3H12A from Mus musculus (Mouse).